Here is a 1322-residue protein sequence, read N- to C-terminus: Serine/threonine-protein kinase TIO (1322 aa).

The region spanning 6–256 is the Protein kinase domain; that stretch reads YHVIELVGEG…WPALREHPFV (251 aa). Residues 12–20 and Lys-35 each bind ATP; that span reads VGEGSFGRV. The Proton acceptor role is filled by Asp-127. Residues 1000–1322 form a required for the binding to Kinesin-12 members region; that stretch reads CMEDRDLLKA…VIVAKVSGES (323 aa). ARM repeat units lie at residues 1056–1098, 1101–1140, 1143–1182, 1183–1223, 1226–1273, and 1281–1320; these read PRLA…DLSR, KAFYKYIGEASVLQPLKEYLTHVDPNIRAKACSALGNMCR, GYFYSALAEHQIIGLLIDRCADPDKRTQKFACFAIGNAAY, HNDT…NLVR, NKLC…LFSL, and QICRQFVKSSELFPVIARLKQSPEANIAHYASVIVAKVSG.

The protein belongs to the protein kinase superfamily. Ser/Thr protein kinase family. Interacts with Kinesin-12 members KIN12A/PAKRP1 and KIN12B/PAKRP1L. Interacts with KIN7B/NACK2. In terms of tissue distribution, ubiquitous.

The protein resides in the cytoplasm. It is found in the cytoskeleton. The protein localises to the phragmoplast. The enzyme catalyses L-seryl-[protein] + ATP = O-phospho-L-seryl-[protein] + ADP + H(+). The catalysed reaction is L-threonyl-[protein] + ATP = O-phospho-L-threonyl-[protein] + ADP + H(+). Plays a role in conventional modes of cytokinesis in meristems and during male gametogenesis but also acts in nonconventional modes of cytokinesis (cellularization) during female gametogenesis. Constitutes a signaling module in association with Kinesin-12 members that is required to support phragmoplast expansion and cell-plate growth in plant cells. In Arabidopsis thaliana (Mouse-ear cress), this protein is Serine/threonine-protein kinase TIO (TIO).